A 342-amino-acid polypeptide reads, in one-letter code: Aldo-keto reductase pigE (342 aa).

The N-terminal stretch at M1–G27 is a signal peptide. An NADP(+)-binding site is contributed by D52. The active-site Proton donor is Y57. Q182 and R236 together coordinate NADP(+). N271 carries an N-linked (GlcNAc...) asparagine glycan.

It belongs to the aldo/keto reductase family. Aldo/keto reductase 2 subfamily.

It participates in secondary metabolite biosynthesis. Its function is as follows. Aldo-keto reductase; part of the gene cluster that mediates the biosynthesis of azaphilone pigments (MonAzPs), a complex mixture of compounds with a common azaphilone skeleton very widely used as food colorants. Within the pathway, pigE is involved in the dehydration of the C-11 alcohol followed by the reduction of the C6(7) double bond which increases the electrophilicity of the C-5 ketone of the resulting acyl benzopyran and allows the intramolecular Knoevenagel aldol condensation with the C-20 enol of the side chain to yield the characteristic linear tricyclic carbon skeletons of the yellow pigments. The first step of the pathway is performed by the nrPKS pigA that forms the hexaketide precursor from successive condensations of five malonyl-CoA units, with a simple acetyl-CoA starter unit. The role of esterase pigG is not clear, but it may play at most a supplementary role in the formation of the benzaldehyde produced by the pigA nrPKS. This very reactive benzaldehyde is intercepted by the pigC ketoreductase that to provide the first stable enzyme-free MonAzPs intermediate, 6-(4-hydroxy-2-oxopentyl)-3-methyl-2,4-dioxocyclohexane carbaldehyde, also known as M7PKS-1. The FAD-dependent monooxygenase pigN hydroxylates M7PKS-1 at C-4, which triggers the formation of the pyran ring. PigJ, pigK and pigD are involved in the acetylation of the pyran ring. PigJ and pigK form the two subunits of a dedicated fungal FAS that produces the side chain fatty acyl moiety of MonAzPs and pigD transfers the fatty acyl chain to the C-4 alcohol. PigM and pigO are involved in the elimination of the omega-1 alcohol. PigM acts as an O-acetyltransferase that synthesizes the putative O-11 acetyl intermediate whereas pigO eliminates acetic acid to yield an intermediate with a C10(11) double bond. The dehydration of the C-11 alcohol followed by the reduction of the C6(7) double bond by the NAD(P)H-dependent oxidoreductase pigE increases the electrophilicity of the C-5 ketone of the resulting acyl benzopyran. This in turn sets up the C-5 ketone for an intramolecular Knoevenagel aldol condensation with the C-20 enol of the side chain. This condensation affords the characteristic linear tricyclic carbon skeletons of the yellow pigments that serve as the common precursors for the classical yellow pigments monascin and ankaflavin, orange pigments rubopunctatin and monascorubrin, and red pigments ribropunctamine and monascorubramine. The FAD-dependent oxidoreductase pigF is especially invoved in the biosynthesis of orange and red pigments via desaturation of C6(7). The polypeptide is Aldo-keto reductase pigE (Monascus ruber (Mold)).